Consider the following 378-residue polypeptide: Transaldolase 1 (378 aa).

The active-site Schiff-base intermediate with substrate is Lys146.

It belongs to the transaldolase family. Type 2 subfamily.

The protein resides in the cytoplasm. It catalyses the reaction D-sedoheptulose 7-phosphate + D-glyceraldehyde 3-phosphate = D-erythrose 4-phosphate + beta-D-fructose 6-phosphate. The protein operates within carbohydrate degradation; pentose phosphate pathway; D-glyceraldehyde 3-phosphate and beta-D-fructose 6-phosphate from D-ribose 5-phosphate and D-xylulose 5-phosphate (non-oxidative stage): step 2/3. Functionally, transaldolase is important for the balance of metabolites in the pentose-phosphate pathway. The chain is Transaldolase 1 from Streptomyces avermitilis (strain ATCC 31267 / DSM 46492 / JCM 5070 / NBRC 14893 / NCIMB 12804 / NRRL 8165 / MA-4680).